The following is a 135-amino-acid chain: uncharacterized protein (135 aa).

This is an uncharacterized protein from Sinorhizobium fredii (strain NBRC 101917 / NGR234).